Reading from the N-terminus, the 88-residue chain is U-scoloptoxin(XY)-Er1b (88 aa).

A signal peptide spans 1-24 (MASQVVLSFALVVVLAVFVGQVDS). Positions 66–88 (RPELSPGALDDSSEEKDNEASLA) are disordered. The propeptide occupies 79–88 (EEKDNEASLA).

Belongs to the scoloptoxin-XY family. In terms of processing, contains 3 disulfide bonds. Expressed by the venom gland.

It is found in the secreted. The chain is U-scoloptoxin(XY)-Er1b from Ethmostigmus rubripes (Giant centipede).